Consider the following 400-residue polypeptide: Enoyl-[acyl-carrier-protein] reductase [NADH] (400 aa).

NAD(+)-binding positions include Gly48–Tyr53, Phe74–Glu75, Asp111–Ala112, and Leu139–Ala140. Residue Tyr225 participates in substrate binding. Residue Tyr235 is the Proton donor of the active site. NAD(+)-binding positions include Lys244 and Val273–Thr275.

The protein belongs to the TER reductase family. In terms of assembly, monomer.

The enzyme catalyses a 2,3-saturated acyl-[ACP] + NAD(+) = a (2E)-enoyl-[ACP] + NADH + H(+). It functions in the pathway lipid metabolism; fatty acid biosynthesis. Its function is as follows. Involved in the final reduction of the elongation cycle of fatty acid synthesis (FAS II). Catalyzes the reduction of a carbon-carbon double bond in an enoyl moiety that is covalently linked to an acyl carrier protein (ACP). The protein is Enoyl-[acyl-carrier-protein] reductase [NADH] of Shewanella pealeana (strain ATCC 700345 / ANG-SQ1).